We begin with the raw amino-acid sequence, 404 residues long: Formate-dependent phosphoribosylglycinamide formyltransferase (404 aa).

N(1)-(5-phospho-beta-D-ribosyl)glycinamide contacts are provided by residues 25 to 26 and Glu-85; that span reads EL. ATP contacts are provided by residues Arg-118, Lys-159, 164-169, 199-202, and Glu-207; these read SSGKGQ and EGFI. The region spanning 123 to 318 is the ATP-grasp domain; the sequence is RLAAEELGLP…EFELHARAIL (196 aa). 2 residues coordinate Mg(2+): Glu-277 and Glu-289. N(1)-(5-phospho-beta-D-ribosyl)glycinamide is bound by residues Asp-296, Lys-365, and 372–373; that span reads RR.

It belongs to the PurK/PurT family. Homodimer.

It catalyses the reaction N(1)-(5-phospho-beta-D-ribosyl)glycinamide + formate + ATP = N(2)-formyl-N(1)-(5-phospho-beta-D-ribosyl)glycinamide + ADP + phosphate + H(+). Its pathway is purine metabolism; IMP biosynthesis via de novo pathway; N(2)-formyl-N(1)-(5-phospho-D-ribosyl)glycinamide from N(1)-(5-phospho-D-ribosyl)glycinamide (formate route): step 1/1. Functionally, involved in the de novo purine biosynthesis. Catalyzes the transfer of formate to 5-phospho-ribosyl-glycinamide (GAR), producing 5-phospho-ribosyl-N-formylglycinamide (FGAR). Formate is provided by PurU via hydrolysis of 10-formyl-tetrahydrofolate. The chain is Formate-dependent phosphoribosylglycinamide formyltransferase from Burkholderia lata (strain ATCC 17760 / DSM 23089 / LMG 22485 / NCIMB 9086 / R18194 / 383).